A 227-amino-acid chain; its full sequence is MNEETNNEFKKNLEKFKKMAKRGKETKMDKKPQIIVVGRSNVGKSTLVRLITKKDVRVGKKPGVTLKINKYDVGNFILVDLPGFGFMTGLEEKVQNKIKKEIVQYIEDNKDQIVGSIILIDVKAFPGIVERWDSKDEIPIDIEMFEFLEELELNPSIFINKMDKIKKNDQDKTLDKIVAIFGCPAPWRQWINDIITIGILKEGIGLNEVMVKINKNVNEYNRVKNKK.

One can recognise an EngB-type G domain in the interval Lys-30 to Glu-219. GTP is bound by residues Gly-38–Ser-45, Gly-63–Lys-67, Asp-80–Gly-83, Asn-160–Asp-163, and Ile-197–Ile-199. The Mg(2+) site is built by Ser-45 and Thr-65.

This sequence belongs to the TRAFAC class TrmE-Era-EngA-EngB-Septin-like GTPase superfamily. EngB GTPase family. Mg(2+) is required as a cofactor.

Functionally, necessary for normal cell division and for the maintenance of normal septation. This Methanococcus aeolicus (strain ATCC BAA-1280 / DSM 17508 / OCM 812 / Nankai-3) protein is Probable GTP-binding protein EngB.